We begin with the raw amino-acid sequence, 473 residues long: Serine/threonine-protein phosphatase T (473 aa).

TPR repeat units lie at residues A5 to N38, I40 to Y72, and A73 to D106. The catalytic stretch occupies residues K159–G472. 4 residues coordinate Mn(2+): D217, H219, D246, and N278. Catalysis depends on H279, which acts as the Proton donor/acceptor. The Mn(2+) site is built by H327 and H404.

It belongs to the PPP phosphatase family. PP-5 (PP-T) subfamily. Mg(2+) serves as cofactor. It depends on Mn(2+) as a cofactor.

Its subcellular location is the nucleus. It catalyses the reaction O-phospho-L-seryl-[protein] + H2O = L-seryl-[protein] + phosphate. It carries out the reaction O-phospho-L-threonyl-[protein] + H2O = L-threonyl-[protein] + phosphate. Functionally, protein phosphatase that specifically binds to and dephosphorylates the molecular chaperone Hsp90. Dephosphorylation positively regulates the Hsp90 chaperone machinery. The polypeptide is Serine/threonine-protein phosphatase T (ppt1) (Schizosaccharomyces pombe (strain 972 / ATCC 24843) (Fission yeast)).